An 89-amino-acid polypeptide reads, in one-letter code: Small ribosomal subunit protein bS20 (89 aa).

A disordered region spans residues 1-29 (MTLANIKSAKKRAVQSEKRRQHNASQRSM).

Belongs to the bacterial ribosomal protein bS20 family.

Its function is as follows. Binds directly to 16S ribosomal RNA. The protein is Small ribosomal subunit protein bS20 of Haemophilus influenzae (strain 86-028NP).